The primary structure comprises 394 residues: MTQLETRTEPMVVNFGPHHPSMHGVLRLVVTLDGEDVVDCEPVIGYLHRGMEKIAENRTNVMFVPYVSRMDYAAGMFYEAIVVNAPERLANIKVPKRASYIRAIMLELNRIANHLLWLGPFLADVGAQTPFFYIFREREMIYDLWEAATGQRLINNNYFRIGGVACDLPWGWLEKCKDFCDWFGPKIDEYEKLITNNPIFRRRIEGLGVIGKEQAINWSLSGPMLRAAGVPWDLRKVDHYECYDDFEWDIAWEKEGDCYARYRVRIEEMRQSLKILRQACEMIPGGPTENLEAQRTVEGKKGDLSGFDYQYVAKKVAPTFKIPNGELYTRLESGKGEIGVFIQGNNDVTPWRFKIRAADSNNLQILPHILKGAKVADIMAILGSIDVIMGSVDR.

This sequence belongs to the complex I 49 kDa subunit family. In terms of assembly, NDH-1 can be composed of about 15 different subunits; different subcomplexes with different compositions have been identified which probably have different functions.

Its subcellular location is the cellular thylakoid membrane. The enzyme catalyses a plastoquinone + NADH + (n+1) H(+)(in) = a plastoquinol + NAD(+) + n H(+)(out). It catalyses the reaction a plastoquinone + NADPH + (n+1) H(+)(in) = a plastoquinol + NADP(+) + n H(+)(out). In terms of biological role, NDH-1 shuttles electrons from an unknown electron donor, via FMN and iron-sulfur (Fe-S) centers, to quinones in the respiratory and/or the photosynthetic chain. The immediate electron acceptor for the enzyme in this species is believed to be plastoquinone. Couples the redox reaction to proton translocation, and thus conserves the redox energy in a proton gradient. Cyanobacterial NDH-1 also plays a role in inorganic carbon-concentration. This chain is NAD(P)H-quinone oxidoreductase subunit H, found in Prochlorococcus marinus (strain NATL2A).